Here is a 274-residue protein sequence, read N- to C-terminus: Thiamine kinase (274 aa).

This sequence belongs to the thiamine kinase family.

The catalysed reaction is thiamine + ATP = thiamine phosphate + ADP + H(+). It participates in cofactor biosynthesis; thiamine diphosphate biosynthesis; thiamine phosphate from thiamine: step 1/1. Its function is as follows. Catalyzes the ATP-dependent phosphorylation of thiamine to thiamine phosphate. Is involved in thiamine salvage. The polypeptide is Thiamine kinase (Salmonella gallinarum (strain 287/91 / NCTC 13346)).